The sequence spans 517 residues: MPCGQPGSGAAPALYVVGVDVGSTTVKCHVYDRAAGVRGSSCRKVESLYPRPGWVELDPEVLWSQFVGVIKEAVQAAGLHMRQVAALGISTQRSTFITWHKRTGKPFHNFISWQDLRSAELVNSWNRSLLLKVIHVIFTVLHFFTGNDRYLAPSVLTFSTQQTSMKLSWVFKNIPEADEAAKKNNCCFGTVDTWLLYRLTKGSVFATDYSNASSTGVFEPFTKCWNPTLCHLLSIPMSIYPPVKDTSFNFGSADSEIFGVPVPIMALVADQQSAMFGECCFQPGDVKLTMGTGGFWNVNTGGNLFASHKGLYPLIGWKIGEEVVYLTEGSMSNIGTTIKWAQDINLFTNVDETAKMARSIVDSQGVCFVPGFQVSANDPYLCASFMGLKPTTTRNHLVRAILESVAFRNKQLFDIIVKKVRIPLQTVRADGGVSNNSFVMQMTSDLINKKIEKPSNTDMSSLGAAFLAGLASGLWTDKEQLKKLRQIETVFEPQKDEKEYKPAMDTWMRAVKCSLHW.

The ATP site is built by S23 and T24. Glycerol contacts are provided by R93, D270, and Q271. ATP is bound by residues T292, G335, and G432.

Belongs to the FGGY kinase family.

Its subcellular location is the cytoplasm. It catalyses the reaction glycerol + ATP = sn-glycerol 3-phosphate + ADP + H(+). Its pathway is polyol metabolism; glycerol degradation via glycerol kinase pathway; sn-glycerol 3-phosphate from glycerol: step 1/1. Skin-specific kinase that plays a key role in glycerol metabolism, catalyzing its phosphorylation to produce sn-glycerol 3-phosphate. Involved in skin-specific regulation of sterol regulatory element-binding protein (SREBP) processing and lipid biosynthesis. The chain is Glycerol kinase 5 (GK5) from Gallus gallus (Chicken).